We begin with the raw amino-acid sequence, 201 residues long: Recombination protein RecR (201 aa).

The C4-type zinc finger occupies 59–74 (CKICGNIDTENICRIC). The Toprim domain maps to 82–177 (SIIAIVETVA…KISRLASGIP (96 aa)).

It belongs to the RecR family.

In terms of biological role, may play a role in DNA repair. It seems to be involved in an RecBC-independent recombinational process of DNA repair. It may act with RecF and RecO. The sequence is that of Recombination protein RecR from Rickettsia massiliae (strain Mtu5).